The chain runs to 128 residues: Large ribosomal subunit protein bL12 (128 aa).

It belongs to the bacterial ribosomal protein bL12 family. In terms of assembly, homodimer. Part of the ribosomal stalk of the 50S ribosomal subunit. Forms a multimeric L10(L12)X complex, where L10 forms an elongated spine to which 2 to 4 L12 dimers bind in a sequential fashion. Binds GTP-bound translation factors.

Its function is as follows. Forms part of the ribosomal stalk which helps the ribosome interact with GTP-bound translation factors. Is thus essential for accurate translation. The chain is Large ribosomal subunit protein bL12 from Sulfurihydrogenibium sp. (strain YO3AOP1).